The chain runs to 856 residues: DNA mismatch repair protein MutS (856 aa).

618-625 (GPNMGGKS) provides a ligand contact to ATP.

The protein belongs to the DNA mismatch repair MutS family.

Functionally, this protein is involved in the repair of mismatches in DNA. It is possible that it carries out the mismatch recognition step. This protein has a weak ATPase activity. This is DNA mismatch repair protein MutS from Shewanella baltica (strain OS223).